The chain runs to 103 residues: MYAVIKTGGKQYRVAAGEKIKVEQIPADVGSEITIDQVFMVGEGESVKIGTPVVSGATVTATVVSHGRHDKIKIFKMRRRKHYQKHQGHRQNYTELRIEAISA.

It belongs to the bacterial ribosomal protein bL21 family. As to quaternary structure, part of the 50S ribosomal subunit. Contacts protein L20.

Its function is as follows. This protein binds to 23S rRNA in the presence of protein L20. The protein is Large ribosomal subunit protein bL21 of Aromatoleum aromaticum (strain DSM 19018 / LMG 30748 / EbN1) (Azoarcus sp. (strain EbN1)).